The primary structure comprises 366 residues: Glucan organizing enzyme 1 (366 aa).

Residues 1 to 24 (MLPLWARGGKPIVIPLPQKRHITL) lie on the Extracellular side of the membrane. Residues 25-45 (PALPILLLLLGTGFLLHSLFF) traverse the membrane as a helical segment. The Cytoplasmic segment spans residues 46–366 (PPPPPHPPGK…ETYKKWKRGH (321 aa)).

The protein belongs to the glycosyltransferase 32 family.

It localises to the cell membrane. In terms of biological role, plays a role in the localization of glycogen rosettes to the plasma membrane. Required for correct cell wall organization and may facilitate the connection between beta-1,3-glucan and beta-1,6-glucan in the cell wall. This chain is Glucan organizing enzyme 1, found in Cryptococcus neoformans var. grubii serotype A (strain H99 / ATCC 208821 / CBS 10515 / FGSC 9487) (Filobasidiella neoformans var. grubii).